The chain runs to 420 residues: 3-phosphoshikimate 1-carboxyvinyltransferase (420 aa).

Positions 26, 27, and 31 each coordinate 3-phosphoshikimate. Phosphoenolpyruvate is bound at residue lysine 26. Glycine 97 and arginine 125 together coordinate phosphoenolpyruvate. 3-phosphoshikimate is bound by residues serine 170, serine 171, glutamine 172, aspartate 297, asparagine 320, and lysine 324. Glutamine 172 is a phosphoenolpyruvate binding site. The Proton acceptor role is filled by aspartate 297. Residues arginine 328, arginine 375, and lysine 400 each coordinate phosphoenolpyruvate.

The protein belongs to the EPSP synthase family. As to quaternary structure, monomer.

It is found in the cytoplasm. It carries out the reaction 3-phosphoshikimate + phosphoenolpyruvate = 5-O-(1-carboxyvinyl)-3-phosphoshikimate + phosphate. Its pathway is metabolic intermediate biosynthesis; chorismate biosynthesis; chorismate from D-erythrose 4-phosphate and phosphoenolpyruvate: step 6/7. Functionally, catalyzes the transfer of the enolpyruvyl moiety of phosphoenolpyruvate (PEP) to the 5-hydroxyl of shikimate-3-phosphate (S3P) to produce enolpyruvyl shikimate-3-phosphate and inorganic phosphate. The chain is 3-phosphoshikimate 1-carboxyvinyltransferase from Rhizobium leguminosarum bv. trifolii (strain WSM2304).